The primary structure comprises 480 residues: Initiation-specific alpha-1,6-mannosyltransferase (480 aa).

The Cytoplasmic segment spans residues 1–15; it reads MSRKLSHLIATRKSK. Residues 16–30 traverse the membrane as a helical; Signal-anchor for type II membrane protein segment; the sequence is TIVVTVLLIYSLLTF. Topologically, residues 31 to 480 are lumenal; it reads HLSNKRLLSQ…EDADKNAGHK (450 aa). The DXD motif signature appears at 187–189; the sequence is DMD. N-linked (GlcNAc...) asparagine glycans are attached at residues Asn203, Asn281, Asn341, and Asn393.

Belongs to the glycosyltransferase 32 family. Mn(2+) is required as a cofactor. Post-translationally, glycosylated.

Its subcellular location is the endoplasmic reticulum membrane. It localises to the golgi apparatus membrane. It carries out the reaction Transfers an alpha-D-mannosyl residue from GDP-mannose into lipid-linked oligosaccharide, forming an alpha-(1-&gt;6)-D-mannosyl-D-mannose linkage.. In terms of biological role, mannosyltransferase involved in outer chain elongation of asparagine-linked oligosaccharides of the type Man(9)GlcNAc(2). Adds the first alpha-1,6-mannose to the Man(8)GlcNAc(2) and Man(9)GlcNAc(2), but not Man(5)GlcNAc(2), endoplasmic reticulum intermediates. Represents the first enzymatic event required for synthesis of outer chain mannose linkages on yeast secretory proteins. Also has the potential to transfer a second alpha-1,6-mannose to the Man(8)GlcNAc(2) core oligosaccharide. This is Initiation-specific alpha-1,6-mannosyltransferase from Saccharomyces cerevisiae (strain ATCC 204508 / S288c) (Baker's yeast).